Reading from the N-terminus, the 243-residue chain is Biosynthetic peptidoglycan transglycosylase (243 aa).

A helical transmembrane segment spans residues 22-42 (LIVLLVLALMSVLQVIVFRFV).

This sequence belongs to the glycosyltransferase 51 family.

The protein resides in the cell inner membrane. It carries out the reaction [GlcNAc-(1-&gt;4)-Mur2Ac(oyl-L-Ala-gamma-D-Glu-L-Lys-D-Ala-D-Ala)](n)-di-trans,octa-cis-undecaprenyl diphosphate + beta-D-GlcNAc-(1-&gt;4)-Mur2Ac(oyl-L-Ala-gamma-D-Glu-L-Lys-D-Ala-D-Ala)-di-trans,octa-cis-undecaprenyl diphosphate = [GlcNAc-(1-&gt;4)-Mur2Ac(oyl-L-Ala-gamma-D-Glu-L-Lys-D-Ala-D-Ala)](n+1)-di-trans,octa-cis-undecaprenyl diphosphate + di-trans,octa-cis-undecaprenyl diphosphate + H(+). It participates in cell wall biogenesis; peptidoglycan biosynthesis. Peptidoglycan polymerase that catalyzes glycan chain elongation from lipid-linked precursors. The sequence is that of Biosynthetic peptidoglycan transglycosylase from Xylella fastidiosa (strain 9a5c).